Here is a 274-residue protein sequence, read N- to C-terminus: HTH-type transcriptional regulator GadX (274 aa).

The HTH araC/xylS-type domain occupies 145 to 242; that stretch reads TRVCTVINNN…GMTPTEYQER (98 aa). 2 DNA-binding regions (H-T-H motif) span residues 162–183 and 209–232; these read ARIASELLMSPSLLKKKLREEE and IKRVAVSCGYHSVSYFIYVFRNYY.

Homodimer.

Positively regulates the expression of about fifteen genes involved in acid resistance such as gadA, gadB and gadC. Depending on the conditions (growth phase and medium), can repress gadW. The protein is HTH-type transcriptional regulator GadX (gadX) of Escherichia coli (strain K12).